Here is an 85-residue protein sequence, read N- to C-terminus: Electron transfer flavoprotein regulatory factor 1 homolog (85 aa).

Belongs to the complex I LYR family. In terms of tissue distribution, highly expressed in the larval fat body.

The protein localises to the mitochondrion. Functionally, acts as a regulator of the electron transfer flavoprotein by promoting the removal of flavin from the ETF holoenzyme. May act with the ETF complex to coordinate lipid homeostasis in the fat body in response to stage-specific demands. This is Electron transfer flavoprotein regulatory factor 1 homolog from Drosophila melanogaster (Fruit fly).